A 396-amino-acid polypeptide reads, in one-letter code: S-adenosylmethionine synthase (396 aa).

Position 15 (His15) interacts with ATP. Asp17 lines the Mg(2+) pocket. Glu43 contacts K(+). Positions 56 and 99 each coordinate L-methionine. Residues 99 to 109 form a flexible loop region; it reads QSSDIAQGVDR. Residues 175–177, 241–242, Asp250, 256–257, Ser273, and Lys277 contribute to the ATP site; these read DGK, RF, and RK. Residue Asp250 coordinates L-methionine. Lys281 provides a ligand contact to L-methionine.

Belongs to the AdoMet synthase family. As to quaternary structure, homotetramer; dimer of dimers. It depends on Mg(2+) as a cofactor. The cofactor is K(+).

Its subcellular location is the cytoplasm. It catalyses the reaction L-methionine + ATP + H2O = S-adenosyl-L-methionine + phosphate + diphosphate. Its pathway is amino-acid biosynthesis; S-adenosyl-L-methionine biosynthesis; S-adenosyl-L-methionine from L-methionine: step 1/1. Functionally, catalyzes the formation of S-adenosylmethionine (AdoMet) from methionine and ATP. The overall synthetic reaction is composed of two sequential steps, AdoMet formation and the subsequent tripolyphosphate hydrolysis which occurs prior to release of AdoMet from the enzyme. This is S-adenosylmethionine synthase from Pelotomaculum thermopropionicum (strain DSM 13744 / JCM 10971 / SI).